The primary structure comprises 34 residues: Photosystem II reaction center protein Psb30 (34 aa).

Residues 7–27 traverse the membrane as a helical segment; that stretch reads VAQLISLFLILTSGPAIIVLI.

This sequence belongs to the Psb30/Ycf12 family. As to quaternary structure, PSII is composed of 1 copy each of membrane proteins PsbA, PsbB, PsbC, PsbD, PsbE, PsbF, PsbH, PsbI, PsbJ, PsbK, PsbL, PsbM, PsbT, PsbX, PsbY, PsbZ, Psb30/Ycf12, peripheral proteins of the oxygen-evolving complex and a large number of cofactors. It forms dimeric complexes.

It is found in the plastid. The protein localises to the chloroplast thylakoid membrane. Its function is as follows. A core subunit of photosystem II (PSII), probably helps stabilize the reaction center. The protein is Photosystem II reaction center protein Psb30 of Rhodomonas salina (Cryptomonas salina).